The primary structure comprises 403 residues: Argininosuccinate synthase (403 aa).

ATP-binding positions include 13–21 (AYSGGLDTS) and A40. Y91 and S96 together coordinate L-citrulline. ATP is bound at residue G121. L-aspartate-binding residues include T123, N127, and D128. Residue N127 coordinates L-citrulline. 5 residues coordinate L-citrulline: R131, S180, S189, E265, and Y277.

It belongs to the argininosuccinate synthase family. Type 1 subfamily. In terms of assembly, homotetramer.

It is found in the cytoplasm. The enzyme catalyses L-citrulline + L-aspartate + ATP = 2-(N(omega)-L-arginino)succinate + AMP + diphosphate + H(+). It functions in the pathway amino-acid biosynthesis; L-arginine biosynthesis; L-arginine from L-ornithine and carbamoyl phosphate: step 2/3. This is Argininosuccinate synthase from Leptospira interrogans serogroup Icterohaemorrhagiae serovar copenhageni (strain Fiocruz L1-130).